The sequence spans 873 residues: Leucine--tRNA ligase (873 aa).

The 'HIGH' region signature appears at 42–52 (PYPSGKLHMGH). The 'KMSKS' region motif lies at 628-632 (KMSKS). Residue K631 coordinates ATP.

It belongs to the class-I aminoacyl-tRNA synthetase family.

Its subcellular location is the cytoplasm. It catalyses the reaction tRNA(Leu) + L-leucine + ATP = L-leucyl-tRNA(Leu) + AMP + diphosphate. The sequence is that of Leucine--tRNA ligase from Azoarcus sp. (strain BH72).